The following is a 182-amino-acid chain: dCTP deaminase, dUMP-forming (182 aa).

Residues 96–101 (RSSIGR), Asp-113, 121–123 (TLE), Gln-142, Tyr-156, and Gln-163 each bind dCTP. Glu-123 acts as the Proton donor/acceptor in catalysis.

This sequence belongs to the dCTP deaminase family. In terms of assembly, homotrimer.

The catalysed reaction is dCTP + 2 H2O = dUMP + NH4(+) + diphosphate. The protein operates within pyrimidine metabolism; dUMP biosynthesis; dUMP from dCTP: step 1/1. Bifunctional enzyme that catalyzes both the deamination of dCTP to dUTP and the hydrolysis of dUTP to dUMP without releasing the toxic dUTP intermediate. In Halothermothrix orenii (strain H 168 / OCM 544 / DSM 9562), this protein is dCTP deaminase, dUMP-forming.